The chain runs to 514 residues: Putative GTP-binding protein 6 (514 aa).

The disordered stretch occupies residues tryptophan 48–aspartate 71. Residues glutamate 59 to aspartate 71 show a composition bias toward acidic residues. One can recognise a Hflx-type G domain in the interval proline 285–threonine 449. Threonine 298 and threonine 319 together coordinate Mg(2+).

It belongs to the TRAFAC class OBG-HflX-like GTPase superfamily. HflX GTPase family. It depends on Mg(2+) as a cofactor.

In Mus musculus (Mouse), this protein is Putative GTP-binding protein 6 (Gtpbp6).